An 866-amino-acid polypeptide reads, in one-letter code: Phospholipase D gamma 3 (866 aa).

In terms of domain architecture, C2 spans 31-170 (PFDTSSGSLR…CSGNRIEGLF (140 aa)). Residue Asp-232 participates in Ca(2+) binding. The 36-residue stretch at 371-406 (TIYTHHQKTMIVDAEAAQNRRKIVAFVGGLDLCNGR) folds into the PLD phosphodiesterase 1 domain. Active-site residues include His-376, Lys-378, and Asp-383. Residue His-376 coordinates a 1,2-diacyl-sn-glycero-3-phosphate. 2 residues coordinate Ca(2+): His-412 and His-444. An a 1,2-diacyl-sn-glycero-3-phosphate-binding site is contributed by Gln-572. Phosphoserine is present on Ser-692. The 28-residue stretch at 712–739 (FMIYVHSKGMVVDDEFVLIGSANINQRS) folds into the PLD phosphodiesterase 2 domain. Catalysis depends on residues His-717, Lys-719, and Asp-724. His-717 lines the a 1,2-diacyl-sn-glycero-3-phosphate pocket. Ca(2+) is bound at residue Glu-780.

Belongs to the phospholipase D family. C2-PLD subfamily. It depends on Ca(2+) as a cofactor. In terms of tissue distribution, highly expressed in inflorescences and old leaves, moderately in stems, roots, siliques and young leaves and low in flowers.

The protein localises to the cytoplasm. It is found in the membrane. It carries out the reaction a 1,2-diacyl-sn-glycero-3-phosphocholine + H2O = a 1,2-diacyl-sn-glycero-3-phosphate + choline + H(+). With respect to regulation, inhibited by neomycin. Its function is as follows. Hydrolyzes glycerol-phospholipids at the terminal phosphodiesteric bond to generate phosphatidic acids (PA). Plays an important role in various cellular processes, including phytohormone action, vesicular trafficking, secretion, cytoskeletal arrangement, meiosis, tumor promotion, pathogenesis, membrane deterioration and senescence. Can use phosphatidylserine but prefers ethanolamine-containing lipids as substrates. In Arabidopsis thaliana (Mouse-ear cress), this protein is Phospholipase D gamma 3.